The sequence spans 147 residues: Hemoglobin subunit beta-Y (147 aa).

The 145-residue stretch at 3–147 folds into the Globin domain; that stretch reads HFTAEEKAAI…VANALSLKYH (145 aa). Heme b contacts are provided by H64 and H93.

The protein belongs to the globin family. As to quaternary structure, heterotetramer of two alpha chains and two beta chains.

In terms of biological role, this is a minor early embryonic beta chain. In Mesocricetus auratus (Golden hamster), this protein is Hemoglobin subunit beta-Y (HBBY).